Reading from the N-terminus, the 501-residue chain is Pyruvate dehydrogenase protein X component, mitochondrial (501 aa).

The transit peptide at 1 to 53 (MAASWRLHCNQPLLRYLLGFSSRRSLGLAQGAAAWPVDRGASWRWFHSTQLLQ) directs the protein to the mitochondrion. In terms of domain architecture, Lipoyl-binding spans 56–132 (PIKVLMPSLS…QLGSLIALMV (77 aa)). Lys97 carries the N6-lipoyllysine modification. Residues 145-176 (KDVSAPPPVSKPPAPTQPSPQPQIPCPARKEH) are disordered. A compositionally biased stretch (pro residues) spans 149-169 (APPPVSKPPAPTQPSPQPQIP). Residues 183 to 220 (RLSPAARNILEKHSLDASQGTATGPRGIFTKEDALKLV) enclose the Peripheral subunit-binding (PSBD) domain. Lys194 is subject to N6-acetyllysine. At Ser196 the chain carries Phosphoserine. A disordered region spans residues 228–256 (ITESRPASAPPPSLSASVPPQATAGPSYP). Lys394 is modified (N6-succinyllysine).

It belongs to the 2-oxoacid dehydrogenase family. As to quaternary structure, part of the inner core of the multimeric pyruvate dehydrogenase complex that is composed of about 48 DLAT and 12 PDHX molecules. This core binds multiple copies of pyruvate dehydrogenase (subunits PDH1A and PDHB, E1), dihydrolipoamide acetyltransferase (DLAT, E2) and lipoamide dehydrogenase (DLD, E3). Interacts with SIRT4. Interacts with DLD. Delipoylated at Lys-97 by SIRT4, delipoylation decreases the PHD complex activity.

Its subcellular location is the mitochondrion matrix. Its function is as follows. Required for anchoring dihydrolipoamide dehydrogenase (E3) to the dihydrolipoamide transacetylase (E2) core of the pyruvate dehydrogenase complexes of eukaryotes. This specific binding is essential for a functional PDH complex. The chain is Pyruvate dehydrogenase protein X component, mitochondrial (Pdhx) from Mus musculus (Mouse).